The following is a 320-amino-acid chain: Serpentine receptor class gamma-15 (320 aa).

A run of 7 helical transmembrane segments spans residues Thr29–Val49, Gly57–Ile77, Phe85–Ile105, Val151–Pro171, Leu197–Thr217, Ile240–Thr260, and Leu268–Phe288.

Belongs to the nematode receptor-like protein srg family.

It is found in the membrane. In Caenorhabditis elegans, this protein is Serpentine receptor class gamma-15 (srg-15).